The chain runs to 356 residues: Putative aminopeptidase FrvX (356 aa).

Residues His-61 and Asp-175 each contribute to the a divalent metal cation site. Glu-205 serves as the catalytic Proton acceptor. A divalent metal cation-binding residues include Glu-206, Asp-228, and His-316.

Belongs to the peptidase M42 family. It depends on a divalent metal cation as a cofactor.

The protein is Putative aminopeptidase FrvX (frvX) of Escherichia coli (strain K12).